The chain runs to 113 residues: Large ribosomal subunit protein uL22 (113 aa).

This sequence belongs to the universal ribosomal protein uL22 family. In terms of assembly, part of the 50S ribosomal subunit.

Functionally, this protein binds specifically to 23S rRNA; its binding is stimulated by other ribosomal proteins, e.g. L4, L17, and L20. It is important during the early stages of 50S assembly. It makes multiple contacts with different domains of the 23S rRNA in the assembled 50S subunit and ribosome. The globular domain of the protein is located near the polypeptide exit tunnel on the outside of the subunit, while an extended beta-hairpin is found that lines the wall of the exit tunnel in the center of the 70S ribosome. The polypeptide is Large ribosomal subunit protein uL22 (Magnetococcus marinus (strain ATCC BAA-1437 / JCM 17883 / MC-1)).